The primary structure comprises 304 residues: Acetyl-coenzyme A carboxylase carboxyl transferase subunit beta (304 aa).

Residues 23-292 (VWTKCDSCGQ…PNPDAPREGE (270 aa)) enclose the CoA carboxyltransferase N-terminal domain. Residues C27, C30, C46, and C49 each contribute to the Zn(2+) site. The C4-type zinc finger occupies 27 to 49 (CDSCGQVLYRAELERNLEVCPKC). Residues 281-304 (PAPNPDAPREGEVVPPVPDQEPEA) form a disordered region. Residues 295 to 304 (PPVPDQEPEA) show a composition bias toward pro residues.

It belongs to the AccD/PCCB family. Acetyl-CoA carboxylase is a heterohexamer composed of biotin carboxyl carrier protein (AccB), biotin carboxylase (AccC) and two subunits each of ACCase subunit alpha (AccA) and ACCase subunit beta (AccD). The cofactor is Zn(2+).

The protein localises to the cytoplasm. The enzyme catalyses N(6)-carboxybiotinyl-L-lysyl-[protein] + acetyl-CoA = N(6)-biotinyl-L-lysyl-[protein] + malonyl-CoA. It functions in the pathway lipid metabolism; malonyl-CoA biosynthesis; malonyl-CoA from acetyl-CoA: step 1/1. Its function is as follows. Component of the acetyl coenzyme A carboxylase (ACC) complex. Biotin carboxylase (BC) catalyzes the carboxylation of biotin on its carrier protein (BCCP) and then the CO(2) group is transferred by the transcarboxylase to acetyl-CoA to form malonyl-CoA. The sequence is that of Acetyl-coenzyme A carboxylase carboxyl transferase subunit beta from Citrobacter koseri (strain ATCC BAA-895 / CDC 4225-83 / SGSC4696).